We begin with the raw amino-acid sequence, 232 residues long: NAD(P)H-quinone oxidoreductase subunit K 1 (232 aa).

[4Fe-4S] cluster-binding residues include cysteine 49, cysteine 50, cysteine 114, and cysteine 145.

Belongs to the complex I 20 kDa subunit family. As to quaternary structure, NDH-1 can be composed of about 15 different subunits; different subcomplexes with different compositions have been identified which probably have different functions. The cofactor is [4Fe-4S] cluster.

It localises to the cellular thylakoid membrane. The catalysed reaction is a plastoquinone + NADH + (n+1) H(+)(in) = a plastoquinol + NAD(+) + n H(+)(out). It catalyses the reaction a plastoquinone + NADPH + (n+1) H(+)(in) = a plastoquinol + NADP(+) + n H(+)(out). Its function is as follows. NDH-1 shuttles electrons from an unknown electron donor, via FMN and iron-sulfur (Fe-S) centers, to quinones in the respiratory and/or the photosynthetic chain. The immediate electron acceptor for the enzyme in this species is believed to be plastoquinone. Couples the redox reaction to proton translocation, and thus conserves the redox energy in a proton gradient. Cyanobacterial NDH-1 also plays a role in inorganic carbon-concentration. This chain is NAD(P)H-quinone oxidoreductase subunit K 1, found in Acaryochloris marina (strain MBIC 11017).